The sequence spans 356 residues: Guanine nucleotide-binding protein alpha-17 subunit (356 aa).

A lipid anchor (N-myristoyl glycine) is attached at G2. C4 carries the S-palmitoyl cysteine lipid modification. A G-alpha domain is found at 32 to 356 (SIVKLLLLGA…QKNLQKAGMM (325 aa)). A G1 motif region spans residues 35 to 48 (KLLLLGAGECGKST). GTP contacts are provided by residues 40-47 (GAGECGKS), 177-183 (LYSRVAT), 202-206 (DVGGQ), 271-274 (NKKD), and A328. 2 residues coordinate Mg(2+): S47 and T183. A G2 motif region spans residues 175-183 (DILYSRVAT). The segment at 198–207 (FRVFDVGGQR) is G3 motif. The interval 267 to 274 (ILFMNKKD) is G4 motif. The tract at residues 326-331 (TCATDT) is G5 motif.

This sequence belongs to the G-alpha family. G proteins are composed of 3 units; alpha, beta and gamma. The alpha chain contains the guanine nucleotide binding site.

The protein localises to the cell projection. It is found in the cilium. The protein resides in the dendrite. In terms of biological role, guanine nucleotide-binding proteins (G proteins) are involved as modulators or transducers in various transmembrane signaling systems. This specific G-alpha subunit plays an important role in olfaction and in cilia morphogenesis. Involved in chemotactic responses to attractants diacetyl, pyrazine, 2,4,5-trimethylthiazole, benzaldehyde, isoamyl alcohol, butanone and 2,3-pentanedione. Displays a redundant function with gpa-3 in chemotactic responses. Involved in avoidance responses to copper, sodium dodecyl sulfate and linoleic acid. Involved in osmotic avoidance and mechanosensory responses. Involved in specifying fan-like morphology of cilia of head sensory neurons AWC. The sequence is that of Guanine nucleotide-binding protein alpha-17 subunit (odr-3) from Caenorhabditis briggsae.